The primary structure comprises 399 residues: Argininosuccinate synthase (399 aa).

ATP is bound at residue 8 to 16; that stretch reads AYSGGLDTS. Position 87 (Y87) interacts with L-citrulline. G117 contributes to the ATP binding site. The L-aspartate site is built by T119, N123, and D124. Residue N123 participates in L-citrulline binding. Residues R127, S175, E260, and Y272 each contribute to the L-citrulline site.

This sequence belongs to the argininosuccinate synthase family. Type 1 subfamily. In terms of assembly, homotetramer.

It is found in the cytoplasm. The catalysed reaction is L-citrulline + L-aspartate + ATP = 2-(N(omega)-L-arginino)succinate + AMP + diphosphate + H(+). It functions in the pathway amino-acid biosynthesis; L-arginine biosynthesis; L-arginine from L-ornithine and carbamoyl phosphate: step 2/3. This is Argininosuccinate synthase from Mycolicibacterium smegmatis (strain ATCC 700084 / mc(2)155) (Mycobacterium smegmatis).